The following is a 440-amino-acid chain: Transposon Ty1-OL Gag polyprotein (440 aa).

Polar residues-rich tracts occupy residues 1–23 (MESQ…SVTS), 48–60 (TKAN…TPAS), and 127–152 (QSQF…GNTF). 3 disordered regions span residues 1–93 (MESQ…MMTQ), 126–173 (PQSQ…RPPP), and 352–440 (GSRN…PGTY). Positions 153-165 (TDSSSADSDMTST) are enriched in low complexity. The RNA-binding stretch occupies residues 299-401 (NNGIHINNKV…NSKSKTARAH (103 aa)). The segment covering 402 to 418 (NVSTSNNSPSTDNDSIS) has biased composition (low complexity). Residue Ser416 is modified to Phosphoserine. Polar residues predominate over residues 419–428 (KSTTEPIQLN). The segment covering 429–440 (NKHDLHLRPGTY) has biased composition (basic and acidic residues).

Homotrimer.

The protein localises to the cytoplasm. In terms of biological role, capsid protein (CA) is the structural component of the virus-like particle (VLP), forming the shell that encapsulates the retrotransposons dimeric RNA genome. The particles are assembled from trimer-clustered units and there are holes in the capsid shells that allow for the diffusion of macromolecules. CA also has nucleocapsid-like chaperone activity, promoting primer tRNA(i)-Met annealing to the multipartite primer-binding site (PBS), dimerization of Ty1 RNA and initiation of reverse transcription. This chain is Transposon Ty1-OL Gag polyprotein (TY1A-OL), found in Saccharomyces cerevisiae (strain ATCC 204508 / S288c) (Baker's yeast).